The chain runs to 178 residues: Transcription termination/antitermination protein NusG (178 aa).

One can recognise a KOW domain in the interval 130–159 (SVKVKEGPFANFIGTIEEIQLDKRKLKVHV).

This sequence belongs to the NusG family.

In terms of biological role, participates in transcription elongation, termination and antitermination. This chain is Transcription termination/antitermination protein NusG, found in Halalkalibacterium halodurans (strain ATCC BAA-125 / DSM 18197 / FERM 7344 / JCM 9153 / C-125) (Bacillus halodurans).